Reading from the N-terminus, the 926-residue chain is Isoleucine--tRNA ligase (926 aa).

The tract at residues 1–21 (MKMKETLQLGKTAFPMRGNLP) is disordered. The short motif at 57–67 (PYANGNIHLGH) is the 'HIGH' region element. Position 552 (E552) interacts with L-isoleucyl-5'-AMP. Positions 593 to 597 (KMSKS) match the 'KMSKS' region motif. K596 provides a ligand contact to ATP. Zn(2+) is bound by residues C886, C889, C906, and C909.

The protein belongs to the class-I aminoacyl-tRNA synthetase family. IleS type 1 subfamily. As to quaternary structure, monomer. The cofactor is Zn(2+).

The protein localises to the cytoplasm. It catalyses the reaction tRNA(Ile) + L-isoleucine + ATP = L-isoleucyl-tRNA(Ile) + AMP + diphosphate. Functionally, catalyzes the attachment of isoleucine to tRNA(Ile). As IleRS can inadvertently accommodate and process structurally similar amino acids such as valine, to avoid such errors it has two additional distinct tRNA(Ile)-dependent editing activities. One activity is designated as 'pretransfer' editing and involves the hydrolysis of activated Val-AMP. The other activity is designated 'posttransfer' editing and involves deacylation of mischarged Val-tRNA(Ile). The polypeptide is Isoleucine--tRNA ligase (Enterococcus faecalis (strain ATCC 700802 / V583)).